A 112-amino-acid polypeptide reads, in one-letter code: Cytochrome c6 (112 aa).

The N-terminal stretch at 1–25 (MKKRFISVCAIAIALLVSLTPAALA) is a signal peptide. The heme c site is built by cysteine 39, cysteine 42, histidine 43, and methionine 83.

This sequence belongs to the cytochrome c family. PetJ subfamily. In terms of assembly, monomer. Post-translationally, binds 1 heme c group covalently per subunit.

Its subcellular location is the cellular thylakoid lumen. Its function is as follows. Functions as an electron carrier between membrane-bound cytochrome b6-f and photosystem I in oxygenic photosynthesis. The polypeptide is Cytochrome c6 (petJ) (Thermosynechococcus vestitus (strain NIES-2133 / IAM M-273 / BP-1)).